Consider the following 519-residue polypeptide: 2,3-bisphosphoglycerate-independent phosphoglycerate mutase (519 aa).

Mn(2+) is bound by residues aspartate 18 and serine 68. Serine 68 serves as the catalytic Phosphoserine intermediate. Residues histidine 129, 159 to 160, arginine 191, arginine 197, 267 to 270, and lysine 341 each bind substrate; these read RD and RADR. Mn(2+) contacts are provided by aspartate 408, histidine 412, aspartate 449, histidine 450, and histidine 468.

It belongs to the BPG-independent phosphoglycerate mutase family. In terms of assembly, monomer. Mn(2+) is required as a cofactor.

It carries out the reaction (2R)-2-phosphoglycerate = (2R)-3-phosphoglycerate. The protein operates within carbohydrate degradation; glycolysis; pyruvate from D-glyceraldehyde 3-phosphate: step 3/5. Its function is as follows. Catalyzes the interconversion of 2-phosphoglycerate and 3-phosphoglycerate. The protein is 2,3-bisphosphoglycerate-independent phosphoglycerate mutase of Coxiella burnetii (strain RSA 493 / Nine Mile phase I).